A 41-amino-acid polypeptide reads, in one-letter code: Large ribosomal subunit protein bL36B (41 aa).

It belongs to the bacterial ribosomal protein bL36 family.

In Vibrio campbellii (strain ATCC BAA-1116), this protein is Large ribosomal subunit protein bL36B.